The sequence spans 509 residues: Bifunctional purine biosynthesis protein PurH (509 aa).

The MGS-like domain maps to 1 to 145 (MIKRALISVF…KSFKDVVVIS (145 aa)).

This sequence belongs to the PurH family.

It carries out the reaction (6R)-10-formyltetrahydrofolate + 5-amino-1-(5-phospho-beta-D-ribosyl)imidazole-4-carboxamide = 5-formamido-1-(5-phospho-D-ribosyl)imidazole-4-carboxamide + (6S)-5,6,7,8-tetrahydrofolate. The catalysed reaction is IMP + H2O = 5-formamido-1-(5-phospho-D-ribosyl)imidazole-4-carboxamide. It participates in purine metabolism; IMP biosynthesis via de novo pathway; 5-formamido-1-(5-phospho-D-ribosyl)imidazole-4-carboxamide from 5-amino-1-(5-phospho-D-ribosyl)imidazole-4-carboxamide (10-formyl THF route): step 1/1. It functions in the pathway purine metabolism; IMP biosynthesis via de novo pathway; IMP from 5-formamido-1-(5-phospho-D-ribosyl)imidazole-4-carboxamide: step 1/1. This chain is Bifunctional purine biosynthesis protein PurH, found in Brachyspira hyodysenteriae (strain ATCC 49526 / WA1).